The sequence spans 1523 residues: TALPID3 protein (1523 aa).

Residues 1 to 16 show a composition bias toward polar residues; the sequence is MEAESGSSTSQDSLAS. Disordered stretches follow at residues 1–20 and 57–84; these read MEAE…LTAG and SRQA…ASNG. Coiled coils occupy residues 428–466 and 499–528; these read IEKT…MNDL and ILSD…LRAK. Positions 498–585 are required for centrosomal localization; it reads SILSDAKRVL…MEQVKYDQKV (88 aa). Disordered regions lie at residues 1070–1112, 1137–1262, 1294–1313, 1373–1410, and 1498–1523; these read EPLV…LSGD, VITP…SEGE, ANEM…RSHK, DIDH…DADT, and SMNI…ADTF. A compositionally biased stretch (pro residues) spans 1073–1088; the sequence is VPTPLPTPQATPPQTP. Residues 1099–1108 show a composition bias toward polar residues; it reads TPESSPSITE. 2 stretches are compositionally biased toward low complexity: residues 1137-1149 and 1236-1251; these read VITP…EIIT and SSEQ…PTET. The span at 1373-1386 shows a compositional bias: basic and acidic residues; it reads DIDHATARASEDRP. A compositionally biased stretch (low complexity) spans 1507–1523; it reads SLSSIHGDSDSSGADTF.

Belongs to the TALPID3 family. As to expression, ubiquitously expressed.

It localises to the cytoplasm. It is found in the cytoskeleton. The protein localises to the microtubule organizing center. The protein resides in the centrosome. In terms of biological role, required for ciliogenesis and sonic hedgehog/SHH signaling. Independently, involved in regulation of cell intracellular organization. Involved in regulation of cell polarity. The polypeptide is TALPID3 protein (TALPID3) (Gallus gallus (Chicken)).